Consider the following 155-residue polypeptide: uncharacterized protein (155 aa).

A helical membrane pass occupies residues 5-25; the sequence is GIIICVGIAFLIFIFLWAYFK.

The protein localises to the membrane. This is an uncharacterized protein from Acheta domesticus (House cricket).